Consider the following 165-residue polypeptide: Nutritionally-regulated adipose and cardiac-enriched protein (165 aa).

Positions methionine 1–isoleucine 47 are disordered. Residues arginine 34 to cysteine 43 show a composition bias toward basic and acidic residues. The helical transmembrane segment at glycine 112–cysteine 132 threads the bilayer.

As to expression, predominantly expressed in white adipose tissue (at protein level) and brown adipose tissue. Also detected in heart.

The protein resides in the cell membrane. In Mus musculus (Mouse), this protein is Nutritionally-regulated adipose and cardiac-enriched protein (Nrac).